The following is a 340-amino-acid chain: Adenosine kinase (340 aa).

The active site involves Asp292.

Belongs to the carbohydrate kinase PfkB family. Requires Mg(2+) as cofactor.

It carries out the reaction adenosine + ATP = AMP + ADP + H(+). It participates in purine metabolism; AMP biosynthesis via salvage pathway; AMP from adenosine: step 1/1. The polypeptide is Adenosine kinase (ado1) (Schizosaccharomyces pombe (strain 972 / ATCC 24843) (Fission yeast)).